We begin with the raw amino-acid sequence, 323 residues long: NAC transcription factor 25 (323 aa).

In terms of domain architecture, NAC spans 16 to 177; that stretch reads LPPGFRFHPT…DWVLCRIYKK (162 aa). Residues 114–183 mediate DNA binding; sequence VGVKKALVFY…IYKKNSSQRP (70 aa). A compositionally biased stretch (low complexity) spans 201-221; that stretch reads KSSANSSSTSVLDNNDNNNNN. The segment at 201 to 223 is disordered; sequence KSSANSSSTSVLDNNDNNNNNNE.

As to expression, expressed specifically in the tapetum.

It localises to the nucleus. Functionally, transcription factor of the NAC family. May be associated with anther development and pollen production. Required for normal seed development and morphology. The chain is NAC transcription factor 25 (NAC025) from Arabidopsis thaliana (Mouse-ear cress).